The chain runs to 473 residues: MKTLYSLRRSYPVETLFNGTIALAGRDQETTGFAWWAGNARLINLSGKLLGAHVAHAGLIVFWAGAMNLFEVAHFVPEKPMYEQGLILLPHLATLGWGVGPGGEIVDTFPYFVSGVLHLISSAVLGFGGIYHALIGPETLEESFPFFGYVWKDRNKMTTILGIHLILLGAGAFLLVLKALYFGGVYDTWAPGGGDVRKITNPTLNPSAIFGYLLKSPFGGEGWIVSVDNLEDIIGGHVWLGSICIFGGIWHILTKPFAWARRAFVWSGEAYLSYSLAALSLFGFIACCFVWFNNTAYPSEFYGPTGPEASQAQAFTFLVRDQRLGASVGSAQGPTGLGKYLMRSPTGEIIFGGETMRFWDLRAPWLEPLRGPNGLDLSKLRKDIQPWQERRSAEYMTHAPLGSSNSVGGVATEINAVNYVSPRSWLSTSHFVLGFFLFIGHLWHAGRARAAAAGFEKGIDRDFEPVLSMTPLN.

Residues 1 to 14 (MKTLYSLRRSYPVE) constitute a propeptide that is removed on maturation. Thr-15 bears the N-acetylthreonine mark. Thr-15 carries the post-translational modification Phosphothreonine. 5 consecutive transmembrane segments (helical) span residues 69–93 (LFEVAHFVPEKPMYEQGLILLPHLA), 134–155 (LIGPETLEESFPFFGYVWKDRN), 178–200 (KALYFGGVYDTWAPGGGDVRKIT), 255–275 (KPFAWARRAFVWSGEAYLSYS), and 291–312 (WFNNTAYPSEFYGPTGPEASQA). Glu-367 is a [CaMn4O5] cluster binding site. A helical transmembrane segment spans residues 447–471 (RARAAAAGFEKGIDRDFEPVLSMTP).

It belongs to the PsbB/PsbC family. PsbC subfamily. As to quaternary structure, PSII is composed of 1 copy each of membrane proteins PsbA, PsbB, PsbC, PsbD, PsbE, PsbF, PsbH, PsbI, PsbJ, PsbK, PsbL, PsbM, PsbT, PsbX, PsbY, PsbZ, Psb30/Ycf12, at least 3 peripheral proteins of the oxygen-evolving complex and a large number of cofactors. It forms dimeric complexes. Binds multiple chlorophylls and provides some of the ligands for the Ca-4Mn-5O cluster of the oxygen-evolving complex. It may also provide a ligand for a Cl- that is required for oxygen evolution. PSII binds additional chlorophylls, carotenoids and specific lipids. is required as a cofactor.

Its subcellular location is the plastid. It localises to the chloroplast thylakoid membrane. In terms of biological role, one of the components of the core complex of photosystem II (PSII). It binds chlorophyll and helps catalyze the primary light-induced photochemical processes of PSII. PSII is a light-driven water:plastoquinone oxidoreductase, using light energy to abstract electrons from H(2)O, generating O(2) and a proton gradient subsequently used for ATP formation. The chain is Photosystem II CP43 reaction center protein from Abies alba (Edeltanne).